The sequence spans 89 residues: Small ribosomal subunit protein uS15 (89 aa).

Basic and acidic residues predominate over residues 1-16; sequence MSVADIKKQDIVKDNG. The segment at 1–24 is disordered; sequence MSVADIKKQDIVKDNGRSANDTGS.

Belongs to the universal ribosomal protein uS15 family. Part of the 30S ribosomal subunit. Forms a bridge to the 50S subunit in the 70S ribosome, contacting the 23S rRNA.

In terms of biological role, one of the primary rRNA binding proteins, it binds directly to 16S rRNA where it helps nucleate assembly of the platform of the 30S subunit by binding and bridging several RNA helices of the 16S rRNA. Its function is as follows. Forms an intersubunit bridge (bridge B4) with the 23S rRNA of the 50S subunit in the ribosome. The protein is Small ribosomal subunit protein uS15 of Ralstonia pickettii (strain 12J).